The chain runs to 219 residues: Protein DMP5 (219 aa).

The segment at 1–24 (MSALRLRNANTPAPELDELSDQTP) is disordered. Helical transmembrane passes span 51-71 (LSNL…PVFT), 82-102 (FLTA…SFTD), 142-162 (MRFV…AVAL), and 182-202 (VLDI…MVFP).

This sequence belongs to the plant DMP1 protein family.

The protein resides in the endoplasmic reticulum membrane. Functionally, involved in membrane remodeling. This is Protein DMP5 from Arabidopsis thaliana (Mouse-ear cress).